The primary structure comprises 303 residues: L(+)-tartrate dehydratase subunit alpha (303 aa).

Positions 71, 190, and 277 each coordinate iron-sulfur cluster.

The protein belongs to the class-I fumarase family. As to quaternary structure, tetramer of two alpha and two beta subunits. The cofactor is iron-sulfur cluster.

It catalyses the reaction (2R,3R)-tartrate = oxaloacetate + H2O. In Escherichia coli O6:K15:H31 (strain 536 / UPEC), this protein is L(+)-tartrate dehydratase subunit alpha (ttdA).